The sequence spans 62 residues: Ubiquinol-cytochrome c reductase complex 6.7 kDa protein (62 aa).

Topologically, residues 2–25 (TSPAAAGNGLFKFLRPKLRPQSTD) are mitochondrial matrix. A helical transmembrane segment spans residues 26 to 44 (IQAAAGWGVAAVTGALWVI). Topologically, residues 45-62 (QPWDFLRKTFIEKQEEEK) are mitochondrial intermembrane.

Belongs to the UQCR11/QCR10 family. Component of the ubiquinol-cytochrome c oxidoreductase (cytochrome b-c1 complex, complex III, CIII), a multisubunit enzyme composed of 3 respiratory subunits cytochrome b, cytochrome c1 and Rieske protein, 2 core protein subunits, and additional low-molecular weight protein subunits. The complex exists as an obligatory dimer and forms supercomplexes (SCs) in the inner mitochondrial membrane with cytochrome c oxidase (complex IV, CIV).

It localises to the mitochondrion inner membrane. Functionally, component of the ubiquinol-cytochrome c oxidoreductase, a multisubunit transmembrane complex that is part of the mitochondrial electron transport chain which drives oxidative phosphorylation. The respiratory chain contains 3 multisubunit complexes succinate dehydrogenase (complex II, CII), ubiquinol-cytochrome c oxidoreductase (cytochrome b-c1 complex, complex III, CIII) and cytochrome c oxidase (complex IV, CIV), that cooperate to transfer electrons derived from NADH and succinate to molecular oxygen, creating an electrochemical gradient over the inner membrane that drives transmembrane transport and the ATP synthase. The cytochrome b-c1 complex catalyzes electron transfer from ubiquinol to cytochrome c, linking this redox reaction to translocation of protons across the mitochondrial inner membrane, with protons being carried across the membrane as hydrogens on the quinol. In the process called Q cycle, 2 protons are consumed from the matrix, 4 protons are released into the intermembrane space and 2 electrons are passed to cytochrome c. QCR10 has a role in CIII assembly and RIP1 stability. This chain is Ubiquinol-cytochrome c reductase complex 6.7 kDa protein, found in Solanum tuberosum (Potato).